Here is a 314-residue protein sequence, read N- to C-terminus: Homoserine O-acetyltransferase (314 aa).

The active-site Acyl-thioester intermediate is Cys-142. The substrate site is built by Lys-163 and Ser-192. His-235 serves as the catalytic Proton acceptor. Glu-237 is a catalytic residue. Residue Arg-249 coordinates substrate.

It belongs to the MetA family.

It is found in the cytoplasm. The catalysed reaction is L-homoserine + acetyl-CoA = O-acetyl-L-homoserine + CoA. Its pathway is amino-acid biosynthesis; L-methionine biosynthesis via de novo pathway; O-acetyl-L-homoserine from L-homoserine: step 1/1. Its function is as follows. Transfers an acetyl group from acetyl-CoA to L-homoserine, forming acetyl-L-homoserine. This chain is Homoserine O-acetyltransferase, found in Streptococcus pneumoniae (strain Taiwan19F-14).